The chain runs to 577 residues: Envelope glycoprotein E (577 aa).

A signal peptide spans M1–S20. Residues T21–R428 are Virion surface-facing. N87 and N93 each carry an N-linked (GlcNAc...) asparagine; by host glycan. Positions C117–C141 are interaction with gI. Residues N185 and N258 are each glycosylated (N-linked (GlcNAc...) asparagine; by host). 3 cysteine pairs are disulfide-bonded: C274–C300, C283–C292, and C319–C331. Residue N343 is glycosylated (N-linked (GlcNAc...) asparagine; by host). The chain crosses the membrane as a helical span at residues L429–L449. Over C450 to A577 the chain is Intravirion. The Internalization motif motif lies at Y478 to L481. Residues L481–P538 are disordered. Residues E485–E496 are acidic. Composition is skewed to acidic residues over residues Y488–A497 and D521–G533.

Belongs to the alphaherpesvirinae glycoprotein E family. Interacts with gI. In terms of processing, phosphorylated within the acidic cluster. Phosphorylation determines whether endocytosed viral gE traffics to the trans-Golgi network or recycles to the cell membrane.

The protein localises to the virion membrane. It localises to the host cell membrane. Its subcellular location is the host cell junction. The protein resides in the host Golgi apparatus membrane. It is found in the host endosome membrane. In terms of biological role, in epithelial cells, the heterodimer gE/gI is required for the cell-to-cell spread of the virus, by sorting nascent virions to cell junctions. Once the virus reaches the cell junctions, virus particles can spread to adjacent cells extremely rapidly through interactions with cellular receptors that accumulate at these junctions. Implicated in basolateral spread in polarized cells. In neuronal cells, gE/gI is essential for the anterograde spread of the infection throughout the host nervous system. Together with US9, the heterodimer gE/gI is involved in the sorting and transport of viral structural components toward axon tips. In Suid herpesvirus 1 (strain Rice) (SuHV-1), this protein is Envelope glycoprotein E (gE).